Here is a 148-residue protein sequence, read N- to C-terminus: MFDTTLLILLGLAALGFISHNTTVAISILVLIIVRVTPLNAFFPWVEKQGLTVGIIILTIGVMAPIASGTLPPSTLIHSFMNWKSLLAIAVGVFVSWLGGRGVSLMGSQPHLVAGLLVGTVLGVALFRGVPVGPLIAAGIISLFIGKS.

4 helical membrane passes run 14-34, 51-71, 86-106, and 121-141; these read ALGF…LIIV, LTVG…SGTL, LLAI…VSLM, and VLGV…AGII.

It belongs to the UPF0756 family.

It localises to the cell membrane. The protein is UPF0756 membrane protein KPN78578_11500 of Klebsiella pneumoniae subsp. pneumoniae (strain ATCC 700721 / MGH 78578).